The following is a 596-amino-acid chain: Transcription factor COE3 (596 aa).

The disordered stretch occupies residues 1–22 (MFGIQENIPRGGTTMKEEPLGS). Residues 63–66 (RKSN) are interaction with DNA. A C5-type zinc finger spans residues 151-170 (CRVLLTHEIMCSRCCDKKSC). Interaction with DNA stretches follow at residues 197–204 (NCLKNAGN) and 236–239 (NNSK). In terms of domain architecture, IPT/TIG spans 263-346 (PCIKAISPSE…KGAPGRFVYT (84 aa)). A disordered region spans residues 451–483 (TSQANDQVGYSRNTSSVSPRGYVPSSTPQQSNY).

This sequence belongs to the COE family. In terms of assembly, forms either a homodimer or a heterodimer with a related family member. Expressed in brain.

The protein localises to the nucleus. Transcriptional activator. Recognizes variations of the palindromic sequence 5'-ATTCCCNNGGGAATT-3'. This is Transcription factor COE3 (EBF3) from Homo sapiens (Human).